The chain runs to 393 residues: RNA polymerase II holoenzyme cyclin-like subunit (393 aa).

The 96-residue stretch at 51-146 folds into the Cyclin N-terminal domain; the sequence is ICKRLNLRQR…LLEEMEFDMV (96 aa).

The protein belongs to the cyclin family. Cyclin C subfamily. As to quaternary structure, component of the SRB8-11 complex, a regulatory module of the Mediator complex.

The protein resides in the nucleus. Component of the SRB8-11 complex. The SRB8-11 complex is a regulatory module of the Mediator complex which is itself involved in regulation of basal and activated RNA polymerase II-dependent transcription. The SRB8-11 complex may be involved in the transcriptional repression of a subset of genes regulated by Mediator. It may inhibit the association of the Mediator complex with RNA polymerase II to form the holoenzyme complex. The SRB8-11 complex phosphorylates the C-terminal domain (CTD) of the largest subunit of RNA polymerase II. In Mycosarcoma maydis (Corn smut fungus), this protein is RNA polymerase II holoenzyme cyclin-like subunit (SSN8).